The sequence spans 684 residues: Pheromone-processing carboxypeptidase KEX1 (684 aa).

Positions 1–18 (MVIKYLLLILVQSFVAFA) are cleaved as a signal peptide. Residues 19 to 556 (LPFTSRSDPK…NQQTSNRITR (538 aa)) lie on the Lumenal side of the membrane. N62 carries an N-linked (GlcNAc...) asparagine glycan. Residues S181 and D388 contribute to the active site. 2 N-linked (GlcNAc...) asparagine glycosylation sites follow: N424 and N435. H446 is an active-site residue. Residue N474 is glycosylated (N-linked (GlcNAc...) asparagine). The interval 494–549 (KQKEESESKTSPTSVTQSKTSSISAVSGKSLATSTTLDQEHSATPSAEAERAKNQQ) is disordered. Polar residues predominate over residues 510–538 (QSKTSSISAVSGKSLATSTTLDQEHSATP). The chain crosses the membrane as a helical span at residues 557-577 (LIQLLVIVVLIWGVYILYSSY). Topologically, residues 578 to 684 (RSRPSSIIKT…NQTNKQSVSK (107 aa)) are cytoplasmic. The tract at residues 647-684 (MNEGITEHTDNRVDDFIIESDEEDAHDENQTNKQSVSK) is disordered. The segment covering 651–661 (ITEHTDNRVDD) has biased composition (basic and acidic residues). Acidic residues predominate over residues 662-672 (FIIESDEEDAH).

This sequence belongs to the peptidase S10 family.

The protein localises to the golgi apparatus. It is found in the trans-Golgi network membrane. It carries out the reaction Preferential release of a C-terminal arginine or lysine residue.. Protease with a carboxypeptidase B-like function involved in the C-terminal processing of the lysine and arginine residues from protein precursors. Promotes cell fusion and is involved in the programmed cell death. In Debaryomyces hansenii (strain ATCC 36239 / CBS 767 / BCRC 21394 / JCM 1990 / NBRC 0083 / IGC 2968) (Yeast), this protein is Pheromone-processing carboxypeptidase KEX1 (KEX1).